We begin with the raw amino-acid sequence, 253 residues long: Decarboxylase DEC1 (253 aa).

The active-site Schiff-base intermediate with acetoacetate is Lys121.

This sequence belongs to the ADC family.

It participates in mycotoxin biosynthesis. Its function is as follows. Decarboxylase; part of the Tox1B locus, one of the 2 loci that mediate the biosynthesis of T-toxin, a family of linear polyketides 37 to 45 carbons in length, of which the major component is 41 carbons, and which leads to high virulence to maize. One of the PKSs (PKS1 or PKS2) could synthesize a precursor, used subsequently by the other PKS as starter unit, to add additional carbons. Variability in the length of the final carbon backbone C35-47 could be achieved by varying the number of condensation cycles, or use of different starter or extender units or might be due to decarboxylation of the penultimate product, catalyzed by DEC1. Additional proteins are required for the biosynthesis of T-toxin, including oxidoreductases RED1, RED2, RED3, LAM1 and OXI1, as well as esterase TOX9. This chain is Decarboxylase DEC1, found in Cochliobolus heterostrophus (strain C4 / ATCC 48331 / race T) (Southern corn leaf blight fungus).